A 393-amino-acid chain; its full sequence is NAD(P)H-quinone oxidoreductase subunit H, chloroplastic (393 aa).

It belongs to the complex I 49 kDa subunit family. NDH is composed of at least 16 different subunits, 5 of which are encoded in the nucleus.

The protein resides in the plastid. It localises to the chloroplast thylakoid membrane. It catalyses the reaction a plastoquinone + NADH + (n+1) H(+)(in) = a plastoquinol + NAD(+) + n H(+)(out). The enzyme catalyses a plastoquinone + NADPH + (n+1) H(+)(in) = a plastoquinol + NADP(+) + n H(+)(out). Its function is as follows. NDH shuttles electrons from NAD(P)H:plastoquinone, via FMN and iron-sulfur (Fe-S) centers, to quinones in the photosynthetic chain and possibly in a chloroplast respiratory chain. The immediate electron acceptor for the enzyme in this species is believed to be plastoquinone. Couples the redox reaction to proton translocation, and thus conserves the redox energy in a proton gradient. The sequence is that of NAD(P)H-quinone oxidoreductase subunit H, chloroplastic from Cryptomeria japonica (Japanese cedar).